The chain runs to 305 residues: Glycine--tRNA ligase alpha subunit (305 aa).

Belongs to the class-II aminoacyl-tRNA synthetase family. As to quaternary structure, tetramer of two alpha and two beta subunits.

The protein resides in the cytoplasm. The catalysed reaction is tRNA(Gly) + glycine + ATP = glycyl-tRNA(Gly) + AMP + diphosphate. In Vibrio cholerae serotype O1 (strain ATCC 39315 / El Tor Inaba N16961), this protein is Glycine--tRNA ligase alpha subunit (glyQ).